The sequence spans 157 residues: Ribosome maturation factor RimP (157 aa).

It belongs to the RimP family.

The protein localises to the cytoplasm. Its function is as follows. Required for maturation of 30S ribosomal subunits. In Synechococcus sp. (strain JA-3-3Ab) (Cyanobacteria bacterium Yellowstone A-Prime), this protein is Ribosome maturation factor RimP.